The primary structure comprises 570 residues: Arginine--tRNA ligase (570 aa).

A 'HIGH' region motif is present at residues 127-137 (ANPTGPLHLGH).

It belongs to the class-I aminoacyl-tRNA synthetase family. Monomer.

Its subcellular location is the cytoplasm. It carries out the reaction tRNA(Arg) + L-arginine + ATP = L-arginyl-tRNA(Arg) + AMP + diphosphate. The sequence is that of Arginine--tRNA ligase from Neorickettsia sennetsu (strain ATCC VR-367 / Miyayama) (Ehrlichia sennetsu).